Here is a 407-residue protein sequence, read N- to C-terminus: Peptidase T (407 aa).

Zn(2+) is bound at residue H81. The active site involves D83. Residue D142 coordinates Zn(2+). E176 serves as the catalytic Proton acceptor. Zn(2+) contacts are provided by E177, D199, and H381.

It belongs to the peptidase M20B family. Requires Zn(2+) as cofactor.

Its subcellular location is the cytoplasm. It catalyses the reaction Release of the N-terminal residue from a tripeptide.. In terms of biological role, cleaves the N-terminal amino acid of tripeptides. In Streptococcus pneumoniae (strain Hungary19A-6), this protein is Peptidase T.